The primary structure comprises 368 residues: Mitochondrial intermembrane space import and assembly protein 40 (368 aa).

The transit peptide at methionine 1–phenylalanine 29 directs the protein to the mitochondrion. The Mitochondrial matrix segment spans residues alanine 30–arginine 47. Residues leucine 48–alanine 65 form a helical; Signal-anchor for type II membrane protein membrane-spanning segment. Topologically, residues aspartate 66–glutamine 368 are mitochondrial intermembrane. Positions arginine 95–glutamate 104 are enriched in basic and acidic residues. The disordered stretch occupies residues arginine 95 to glutamate 144. Residues threonine 105–threonine 121 show a composition bias toward polar residues. 3 cysteine pairs are disulfide-bonded: cysteine 152–cysteine 154, cysteine 163–cysteine 196, and cysteine 173–cysteine 186. The 45-residue stretch at aspartate 160–tyrosine 204 folds into the CHCH domain. Short sequence motifs (cx9C motif) lie at residues cysteine 163 to cysteine 173 and cysteine 186 to cysteine 196. The interval leucine 208 to isoleucine 310 is disordered. Residues leucine 240–glutamate 263 show a composition bias toward basic and acidic residues. A compositionally biased stretch (low complexity) spans serine 264–lysine 280. Over residues valine 283–alanine 295 the composition is skewed to basic and acidic residues.

In terms of assembly, monomer. The cofactor is Cu(2+). Zn(2+) serves as cofactor.

It is found in the mitochondrion inner membrane. In terms of biological role, required for the import and folding of small cysteine-containing proteins (small Tim) in the mitochondrial intermembrane space (IMS). Forms a redox cycle with ERV1 that involves a disulfide relay system. Precursor proteins to be imported into the IMS are translocated in their reduced form into the mitochondria. The oxidized form of MIA40 forms a transient intermolecular disulfide bridge with the reduced precursor protein, resulting in oxidation of the precursor protein that now contains an intramolecular disulfide bond and is able to undergo folding in the IMS. The polypeptide is Mitochondrial intermembrane space import and assembly protein 40 (MIA40) (Gibberella zeae (strain ATCC MYA-4620 / CBS 123657 / FGSC 9075 / NRRL 31084 / PH-1) (Wheat head blight fungus)).